The following is a 271-amino-acid chain: Serine O-acetyltransferase (271 aa).

Catalysis depends on Cys112, which acts as the Acyl-thioester intermediate. Catalysis depends on His204, which acts as the Proton acceptor. The active site involves Glu206.

It belongs to the MetA family.

The catalysed reaction is L-serine + acetyl-CoA = O-acetyl-L-serine + CoA. Its pathway is amino-acid biosynthesis; L-cysteine biosynthesis; L-cysteine from L-serine: step 1/2. Its function is as follows. Catalyzes the formation of O-acetylserine (OAS) from L-serine and acetyl-CoA. To a lesser extent, is also able to use succinyl-CoA and propionyl-CoA as acyl donors, but not butyryl-CoA. Does not acylate D-serine and L-homoserine. The protein is Serine O-acetyltransferase of Lacticaseibacillus casei (Lactobacillus casei).